The following is a 359-amino-acid chain: Cytohesin-interacting protein (359 aa).

The 90-residue stretch at 77–166 (LVTVEKQDNE…LLTIETLNGT (90 aa)) folds into the PDZ domain. An interaction with CYTH1 region spans residues 166 to 188 (TMILKRTELEAKLQVLKQTLKQK). Residues 166–188 (TMILKRTELEAKLQVLKQTLKQK) adopt a coiled-coil conformation.

Interacts with CYTH1 and SNX27. In terms of tissue distribution, expressed in lymph nodes, thymus, spleen, lung, peripheral blood leukocytes and bone marrow.

The protein localises to the cytoplasm. It localises to the early endosome. Functionally, by its binding to cytohesin-1 (CYTH1), it modifies activation of ARFs by CYTH1 and its precise function may be to sequester CYTH1 in the cytoplasm. The polypeptide is Cytohesin-interacting protein (CYTIP) (Homo sapiens (Human)).